The following is a 251-amino-acid chain: Cholesterol 25-hydroxylase-like protein (251 aa).

Transmembrane regions (helical) follow at residues 22–42 (FFPV…FVLL), 69–89 (WSCL…LSVL), and 108–128 (VVWD…VWHL). In terms of domain architecture, Fatty acid hydroxylase spans 113 to 247 (AACLLLFDFQ…FTHWDKLFGT (135 aa)). Positions 126–130 (WHLLH) match the Histidine box-1 motif. The Histidine box-2 signature appears at 141 to 145 (HKVHH). The Histidine box-3 signature appears at 222–228 (HHDVHHQ).

It belongs to the sterol desaturase family. Fe cation serves as cofactor.

The protein resides in the endoplasmic reticulum membrane. The enzyme catalyses cholesterol + AH2 + O2 = 25-hydroxycholesterol + A + H2O. It catalyses the reaction cholesterol + NADPH + O2 + H(+) = 25-hydroxycholesterol + NADP(+) + H2O. Catalyzes the formation of 25-hydroxycholesterol from cholesterol, leading to repress cholesterol biosynthetic enzymes. Plays a key role in cell positioning and movement in lymphoid tissues: 25-hydroxycholesterol is an intermediate in biosynthesis of 7-alpha,25-dihydroxycholesterol (7-alpha,25-OHC), an oxysterol that acts as a ligand for the G protein-coupled receptor GPR183/EBI2, a chemotactic receptor for a number of lymphoid cells. May play an important role in regulating lipid metabolism by synthesizing a corepressor that blocks sterol regulatory element binding protein (SREBP) processing. In testis, production of 25-hydroxycholesterol by macrophages may play a role in Leydig cell differentiation. This is Cholesterol 25-hydroxylase-like protein (ch25h) from Danio rerio (Zebrafish).